We begin with the raw amino-acid sequence, 275 residues long: NH(3)-dependent NAD(+) synthetase (275 aa).

50–57 (GISGGVDS) is an ATP binding site. Residue Asp-56 participates in Mg(2+) binding. Position 147 (Arg-147) interacts with deamido-NAD(+). An ATP-binding site is contributed by Thr-167. Mg(2+) is bound at residue Glu-172. Deamido-NAD(+) contacts are provided by Lys-180 and Asp-187. ATP-binding residues include Lys-196 and Thr-218. 267–268 (HK) provides a ligand contact to deamido-NAD(+).

Belongs to the NAD synthetase family. In terms of assembly, homodimer.

It carries out the reaction deamido-NAD(+) + NH4(+) + ATP = AMP + diphosphate + NAD(+) + H(+). Its pathway is cofactor biosynthesis; NAD(+) biosynthesis; NAD(+) from deamido-NAD(+) (ammonia route): step 1/1. Functionally, catalyzes the ATP-dependent amidation of deamido-NAD to form NAD. Uses ammonia as a nitrogen source. In Pseudomonas putida (strain ATCC 47054 / DSM 6125 / CFBP 8728 / NCIMB 11950 / KT2440), this protein is NH(3)-dependent NAD(+) synthetase.